Consider the following 109-residue polypeptide: UPF0102 protein Suden_1901 (109 aa).

The protein belongs to the UPF0102 family.

The polypeptide is UPF0102 protein Suden_1901 (Sulfurimonas denitrificans (strain ATCC 33889 / DSM 1251) (Thiomicrospira denitrificans (strain ATCC 33889 / DSM 1251))).